The following is a 214-amino-acid chain: Holliday junction branch migration complex subunit RuvA (214 aa).

Positions M1–K67 are domain I. The interval S68–S146 is domain II. The interval L147–E154 is flexible linker. A domain III region spans residues Q155–A214.

It belongs to the RuvA family. Homotetramer. Forms an RuvA(8)-RuvB(12)-Holliday junction (HJ) complex. HJ DNA is sandwiched between 2 RuvA tetramers; dsDNA enters through RuvA and exits via RuvB. An RuvB hexamer assembles on each DNA strand where it exits the tetramer. Each RuvB hexamer is contacted by two RuvA subunits (via domain III) on 2 adjacent RuvB subunits; this complex drives branch migration. In the full resolvosome a probable DNA-RuvA(4)-RuvB(12)-RuvC(2) complex forms which resolves the HJ.

It localises to the cytoplasm. Its function is as follows. The RuvA-RuvB-RuvC complex processes Holliday junction (HJ) DNA during genetic recombination and DNA repair, while the RuvA-RuvB complex plays an important role in the rescue of blocked DNA replication forks via replication fork reversal (RFR). RuvA specifically binds to HJ cruciform DNA, conferring on it an open structure. The RuvB hexamer acts as an ATP-dependent pump, pulling dsDNA into and through the RuvAB complex. HJ branch migration allows RuvC to scan DNA until it finds its consensus sequence, where it cleaves and resolves the cruciform DNA. This chain is Holliday junction branch migration complex subunit RuvA, found in Synechococcus sp. (strain CC9605).